The following is a 367-amino-acid chain: Innexin inx4 (367 aa).

The Cytoplasmic segment spans residues M1–D21. Residues A22 to L42 form a helical membrane-spanning segment. Topologically, residues S43–Y110 are extracellular. The helical transmembrane segment at Q111–W131 threads the bilayer. Residues K132–E186 lie on the Cytoplasmic side of the membrane. A helical membrane pass occupies residues I187–F207. The Extracellular portion of the chain corresponds to W208–K268. The chain crosses the membrane as a helical span at residues I269 to L289. Residues Y290 to I367 lie on the Cytoplasmic side of the membrane.

This sequence belongs to the pannexin family. As to expression, expressed in nurse cells and oocyte during oogenesis. Uniform expression in imaginal wing disk and low expression in developing imaginal CNS. Expressed in embryonic pole cells and primordial germ cells.

The protein resides in the cell membrane. The protein localises to the cell junction. It localises to the gap junction. In terms of biological role, structural component of the gap junctions in germline cells. Required for differentiation and survival of germline cysts in females and of spermatogonia in males; gap junctional communication between spermatogonia and somatic cyst cells may be required for normal differentiation and survival of spermatogonia. In Drosophila melanogaster (Fruit fly), this protein is Innexin inx4 (zpg).